The sequence spans 356 residues: UDP-N-acetylglucosamine--N-acetylmuramyl-(pentapeptide) pyrophosphoryl-undecaprenol N-acetylglucosamine transferase (356 aa).

Residues 14-16, Asn-126, Arg-162, Ser-190, Ile-244, and Gln-289 each bind UDP-N-acetyl-alpha-D-glucosamine; that span reads TGG.

The protein belongs to the glycosyltransferase 28 family. MurG subfamily.

It localises to the cell inner membrane. The catalysed reaction is di-trans,octa-cis-undecaprenyl diphospho-N-acetyl-alpha-D-muramoyl-L-alanyl-D-glutamyl-meso-2,6-diaminopimeloyl-D-alanyl-D-alanine + UDP-N-acetyl-alpha-D-glucosamine = di-trans,octa-cis-undecaprenyl diphospho-[N-acetyl-alpha-D-glucosaminyl-(1-&gt;4)]-N-acetyl-alpha-D-muramoyl-L-alanyl-D-glutamyl-meso-2,6-diaminopimeloyl-D-alanyl-D-alanine + UDP + H(+). Its pathway is cell wall biogenesis; peptidoglycan biosynthesis. Cell wall formation. Catalyzes the transfer of a GlcNAc subunit on undecaprenyl-pyrophosphoryl-MurNAc-pentapeptide (lipid intermediate I) to form undecaprenyl-pyrophosphoryl-MurNAc-(pentapeptide)GlcNAc (lipid intermediate II). The chain is UDP-N-acetylglucosamine--N-acetylmuramyl-(pentapeptide) pyrophosphoryl-undecaprenol N-acetylglucosamine transferase from Cupriavidus necator (strain ATCC 17699 / DSM 428 / KCTC 22496 / NCIMB 10442 / H16 / Stanier 337) (Ralstonia eutropha).